A 466-amino-acid polypeptide reads, in one-letter code: GVGFKAGVKDYKLTYYTPDYETLATDILAAFRVXPQPGVPPEEAGAAVAAESSTGTWTTVWTDGLTSLDRYKGRCYHIEPVAGEESQFIAYVAYPLDLFEEGSVTNMFTSIVGNVFGFKALRALRLEDLRIPPAYSKTFQGPPHGIQVERDKLNKYGRPLLGCTIKPKLGLLAKNYGRADYECIRGGLDFTKDDENVNSQPFMRWRDRFLFCAEAIYKAQAETGEIKGHYLNATAGTCEEMIKRAVFARELGVPIVMHDYLTGGFTANTSLAHYCRDNGLLLHIHRAMHAVIDRQKNHGIHFRVLAKALRMSGGDHIHAGTVVGKLEGEREITLGFVDLLRDDFIEKDRSRGIYFTQDWVSLPGVLPVASGGIHVWHMPALTEIFGDDSVLQFGGGTLGHPWXNAPGAVANRVALEACVQARNEGRDLAREGNEVIREASKWSPELAAACEIWKEIIFEFEAMDAL.

Residue Lys5 is modified to N6,N6,N6-trimethyllysine. Substrate contacts are provided by Asn114 and Thr164. Lys166 (proton acceptor) is an active-site residue. Lys168 provides a ligand contact to substrate. Mg(2+) contacts are provided by Lys192, Asp194, and Glu195. N6-carboxylysine is present on Lys192. His285 serves as the catalytic Proton acceptor. The substrate site is built by Arg286, His318, and Ser370.

It belongs to the RuBisCO large chain family. Type I subfamily. In terms of assembly, heterohexadecamer of 8 large chains and 8 small chains; disulfide-linked. The disulfide link is formed within the large subunit homodimers. The cofactor is Mg(2+). The disulfide bond which can form in the large chain dimeric partners within the hexadecamer appears to be associated with oxidative stress and protein turnover.

Its subcellular location is the plastid. The protein resides in the chloroplast. It catalyses the reaction 2 (2R)-3-phosphoglycerate + 2 H(+) = D-ribulose 1,5-bisphosphate + CO2 + H2O. It carries out the reaction D-ribulose 1,5-bisphosphate + O2 = 2-phosphoglycolate + (2R)-3-phosphoglycerate + 2 H(+). Functionally, ruBisCO catalyzes two reactions: the carboxylation of D-ribulose 1,5-bisphosphate, the primary event in carbon dioxide fixation, as well as the oxidative fragmentation of the pentose substrate in the photorespiration process. Both reactions occur simultaneously and in competition at the same active site. The protein is Ribulose bisphosphate carboxylase large chain of Asarum canadense (Wild ginger).